A 954-amino-acid polypeptide reads, in one-letter code: Patched domain-containing protein 3 (954 aa).

Basic and acidic residues predominate over residues 1-20; sequence MPWVEPKPRPGPEQKPKLTK. The interval 1–103 is disordered; that stretch reads MPWVEPKPRP…APLPEEETPE (103 aa). Pro residues predominate over residues 42 to 57; that stretch reads QPPPGPLAPPKSPEPS. The span at 90–102 shows a compositional bias: acidic residues; that stretch reads ELDDAPLPEEETP. The helical transmembrane segment at 139 to 159 threads the bilayer; it reads WIFLLAPLMLTAALGTGFLYL. N-linked (GlcNAc...) asparagine glycans are attached at residues asparagine 192, asparagine 275, and asparagine 279. Transmembrane regions (helical) follow at residues 297 to 317, 383 to 403, 423 to 443, 447 to 467, 486 to 506, 520 to 540, and 603 to 623; these read LTGF…QLLL, VIPV…TSCF, FLAV…FVII, SPFL…SAWH, AAVS…TGIM, GMTL…FMAL, and YFVV…CFHV. The SSD domain maps to 383-540; it reads VIPVFHLAYI…ITCFGAFMAL (158 aa). 3 N-linked (GlcNAc...) asparagine glycosylation sites follow: asparagine 678, asparagine 692, and asparagine 737. 5 consecutive transmembrane segments (helical) span residues 804 to 824, 826 to 846, 858 to 878, 894 to 914, and 927 to 947; these read VLVA…YPLC, LWVT…MAFW, LVIC…AFVS, LLGY…CVLA, and IMFL…PVFL.

This sequence belongs to the patched family. As to expression, expressed in germ cells of the testis (at protein level). Detected in blood lymph, colon, small intestine, ovary, testis, prostate, thymus and spleen with highest levels in testis.

Its subcellular location is the cell projection. The protein localises to the cilium. It is found in the flagellum membrane. It localises to the endoplasmic reticulum membrane. Functionally, may play a role in sperm development or sperm function. However, does not appear to have an essential role in spermatogenesis or male fertility. The sequence is that of Patched domain-containing protein 3 (PTCHD3) from Homo sapiens (Human).